Reading from the N-terminus, the 337-residue chain is D-alanine--D-alanine ligase (337 aa).

The region spanning 124-330 (KMWFSALGIP…FTEYLSLVIN (207 aa)) is the ATP-grasp domain. 154 to 209 (ALANWGSIFIKAASQGSSVGCYKVDDSSKVAQVLKDAFGYAPYVVVEKTIKARELE) provides a ligand contact to ATP. Positions 284, 297, and 299 each coordinate Mg(2+).

It belongs to the D-alanine--D-alanine ligase family. Mg(2+) serves as cofactor. It depends on Mn(2+) as a cofactor.

Its subcellular location is the cytoplasm. It carries out the reaction 2 D-alanine + ATP = D-alanyl-D-alanine + ADP + phosphate + H(+). The protein operates within cell wall biogenesis; peptidoglycan biosynthesis. Its function is as follows. Cell wall formation. This chain is D-alanine--D-alanine ligase, found in Shewanella sp. (strain W3-18-1).